A 298-amino-acid chain; its full sequence is MVTPALQMKKPKQFCRRMGQKKQRPARAGQPHSSSDAAQAPAEQPHSSSDAAQAPCPRERCLGPPTTPGPYRSIYFSSPKGHLTRLGLEFFDQPAVPLARAFLGQVLVRRLPNGTELRGRIVETEAYLGPEDEAAHSRGGRQTPRNRGMFMKPGTLYVYIIYGMYFCMNISSQGDGACVLLRALEPLEGLETMRQLRSTLRKGTASRVLKDRELCSGPSKLCQALAINKSFDQRDLAQDEAVWLERGPLEPSEPAVVAAARVGVGHAGEWARKPLRFYVRGSPWVSVVDRVAEQDTQA.

Residues 1 to 17 (MVTPALQMKKPKQFCRR) constitute a mitochondrion transit peptide. Residues 1 to 65 (MVTPALQMKK…CPRERCLGPP (65 aa)) form a disordered region. Positions 9–25 (KKPKQFCRRMGQKKQRP) are enriched in basic residues. A phosphoserine mark is found at serine 78 and serine 252.

It belongs to the DNA glycosylase MPG family. Binds MBD1. Binds SSBP1.

It localises to the cytoplasm. It is found in the mitochondrion matrix. The protein resides in the mitochondrion nucleoid. Its subcellular location is the nucleus. The enzyme catalyses Hydrolysis of alkylated DNA, releasing 3-methyladenine, 3-methylguanine, 7-methylguanine and 7-methyladenine.. With respect to regulation, binding to SSBP1 in mitochondria inhibits glycosylase activity in the context of a single-stranded DNA (ssDNA), but not a double-stranded DNA (dsDNA) substrates. Hydrolysis of the deoxyribose N-glycosidic bond to excise 3-methyladenine, and 7-methylguanine from the damaged DNA polymer formed by alkylation lesions. The polypeptide is DNA-3-methyladenine glycosylase (MPG) (Homo sapiens (Human)).